Consider the following 699-residue polypeptide: DnaJ homolog subfamily C member 14 (699 aa).

The interval 1–230 (MAQKHPGEGG…RHRLGRKRSQ (230 aa)) is disordered. A compositionally biased stretch (pro residues) spans 75–84 (HGPPRGPGPP). Acidic residues predominate over residues 86-102 (AEEDPDQSEASSEESGV). Over residues 117–133 (DGNSSFLSIPSTCNCQG) the composition is skewed to polar residues. Positions 163–176 (GEDEELEGEYDEEE) are enriched in acidic residues. Over residues 203–218 (PAKEDTREGGRRDPRS) the composition is skewed to basic and acidic residues. Basic residues predominate over residues 219-228 (PGRHRLGRKR). The next 3 helical transmembrane spans lie at 251 to 271 (AGFW…ETCG), 301 to 321 (GWAQ…AGLF), and 327 to 347 (LVGA…QLGW). Residues 444–508 (NPFHVLGVEA…ERRKEYEMKR (65 aa)) form the J domain. The disordered stretch occupies residues 655-699 (MSNGNFFAAPQPGPGATAASKPNSTVPKGEAKPKRRKKVRRPFQR). Over residues 662–673 (AAPQPGPGATAA) the composition is skewed to low complexity. Basic residues predominate over residues 687-699 (PKRRKKVRRPFQR).

Interacts with the FxxxFxxxF motif of DRD1 via its C-terminal domain. Interacts with pestivirus nonstructural protein NS2.

The protein localises to the endoplasmic reticulum membrane. Functionally, regulates the export of target proteins, such as DRD1, from the endoplasmic reticulum to the cell surface. Promotes cleavage of pestivirus polyprotein. The protein is DnaJ homolog subfamily C member 14 (DNAJC14) of Bos taurus (Bovine).